The chain runs to 867 residues: MLRYTRNYRLHNVASSLILKRTAIIPSLQGLRRGNFSQDDTTNLNNKKRRKRKVTSISLDDLNSVNLKKVNTKELEFKVRQLKEFTKNLKAQIKRSESRNEKRETEDDIDLEEINKDADSVFENLSNHERRKNHKVQNHLGIPIGNSQNQSTNLSSLILGSSLEQAQKFLPSTLVTRLNDNNLVLKCLTDKTRQNWNPIIKSISKNREGLNGIGKNKLNSTLLSSVKGLYFDNIERLDKMLLEYVDNDITKFTTEMYLSLFENLSNIKLTDPNMSNEVIVKMKELLERYDEALIKGTDTKMTQYILNNGIKFASKLNNHEHMEYFLTKFKGYGIIPNRINYTTVLQYYIRMGISKKSWDIFDTMKFLSKEHAPDLIAYNSVLTLCSRDKDYSKALDIYNEMVNSGINPGTSTRTIMAKILAIASRDSFTSEGKSESLRLLGWKFIHEIIETTGSKLSHKSLESMIALAAYDGDVGMSRALYHCYVTTKYRNVVQNWVGKRDYVKIWKSVLDPRMLNYLFLAYSNYNSNKLPLLLGYEQGILLRRNIINSVDYSGRSEFDDDLGVLLPFLPVTEIKHNWELLAESRAIWHFNLEYGGSTSLRSTSESIVDKSTIMTAVENSKTIDDFKWNIFSKIHELKSQTINTDVLNSIVLNTYLTIPIKLHDKKEFVLRLKEFTFQQHDFDSKIESFYLESNNKMVEDNDKNSSSPSTSEDTSIELAEDPNDLLAHYILSLKHKILANCSTYELTMKAASKFNDIKLATEAWEERGKFRKSSSFQKLAQNNRMESDTKFAELMVAFFSSQKMYTDALHVVMSSKRYIDWKYPMVKNLHRGLLEIEDSRSIDILLDIVNRKSKVQTIEETISSLTL.

The N-terminal 96 residues, 1-96 (MLRYTRNYRL…KNLKAQIKRS (96 aa)), are a transit peptide targeting the mitochondrion. 2 PPR repeats span residues 337–371 (NRINYTTVLQYYIRMGISKKSWDIFDTMKFLSKEH) and 374–408 (DLIAYNSVLTLCSRDKDYSKALDIYNEMVNSGINP).

The protein belongs to the CCM1 family. Binds to mitochondrial small subunit 15S rRNA.

The protein resides in the mitochondrion. Functionally, regulates mitochondrial small subunit maturation by controlling 15S rRNA 5'-end processing. Localizes to the 5' precursor of the 15S rRNA in a position that is subsequently occupied by mS47 in the mature yeast mtSSU. Uses structure and sequence-specific RNA recognition, binding to a single-stranded region of the precursor and specifically recognizing bases -6 to -1. The exchange of Ccm1 for mS47 is coupled to the irreversible removal of precursor rRNA that is accompanied by conformational changes of the mitoribosomal proteins uS5m and mS26. These conformational changes signal completion of 5'-end rRNA processing through protection of the mature 5'-end of the 15S rRNA and stabilization of mS47. The removal of the 5' precursor together with the dissociation of Ccm1 may be catalyzed by the 5'-3' exoribonuclease Pet127. Involved in the specific removal of group I introns in mitochondrial encoded transcripts. In Vanderwaltozyma polyspora (strain ATCC 22028 / DSM 70294 / BCRC 21397 / CBS 2163 / NBRC 10782 / NRRL Y-8283 / UCD 57-17) (Kluyveromyces polysporus), this protein is Mitochondrial 15S rRNA processing factor CCM1 (CCM1).